The sequence spans 138 residues: Small ribosomal subunit protein uS11 (138 aa).

Disordered stretches follow at residues methionine 1 to alanine 29 and glycine 117 to valine 138. The span at lysine 13–lysine 22 shows a compositional bias: basic residues.

Belongs to the universal ribosomal protein uS11 family. In terms of assembly, part of the 30S ribosomal subunit. Interacts with proteins S7 and S18. Binds to IF-3.

Its function is as follows. Located on the platform of the 30S subunit, it bridges several disparate RNA helices of the 16S rRNA. Forms part of the Shine-Dalgarno cleft in the 70S ribosome. The chain is Small ribosomal subunit protein uS11 from Mycobacterium ulcerans (strain Agy99).